We begin with the raw amino-acid sequence, 461 residues long: Cysteine--tRNA ligase (461 aa).

Cys30 is a binding site for Zn(2+). A 'HIGH' region motif is present at residues 32-42 (VTVYDLCHIGH). 3 residues coordinate Zn(2+): Cys211, His236, and Glu240. The 'KMSKS' region motif lies at 268 to 272 (KMSKS). Lys271 is an ATP binding site.

This sequence belongs to the class-I aminoacyl-tRNA synthetase family. Monomer. Requires Zn(2+) as cofactor.

It localises to the cytoplasm. It carries out the reaction tRNA(Cys) + L-cysteine + ATP = L-cysteinyl-tRNA(Cys) + AMP + diphosphate. The protein is Cysteine--tRNA ligase of Shewanella sp. (strain MR-4).